The primary structure comprises 170 residues: Methanogen homoaconitase small subunit (170 aa).

A YLRT motif is present at residues 24–27; the sequence is YLRT.

It belongs to the LeuD family. LeuD type 2 subfamily. As to quaternary structure, heterotetramer of 2 HacA and 2 HacB proteins. Cannot form a complex with LeuC.

The catalysed reaction is (2R)-homocitrate = (2R,3S)-homoisocitrate. It catalyses the reaction (2R)-homocitrate = cis-homoaconitate + H2O. The enzyme catalyses (2R,3S)-homoisocitrate = cis-homoaconitate + H2O. It carries out the reaction cis-(homo)2aconitate + H2O = (2R,3S)-iso(homo)2citrate. The catalysed reaction is cis-(homo)3aconitate + H2O = (2R,3S)-iso(homo)3citrate. It catalyses the reaction (R)-malate = maleate + H2O. The enzyme catalyses cis-aconitate + H2O = D-threo-isocitrate. The protein operates within organic acid metabolism; 2-oxosuberate biosynthesis. Functionally, component of a hydro-lyase with broad substrate specificity for cis-unsaturated tricarboxylic acids. Catalyzes both the reversible dehydration of (R)-homocitrate ((R)-2-hydroxybutane-1,2,4-tricarboxylate) to produce cis-homoaconitate ((Z)-but-1-ene-1,2,4-tricarboxylate), and its hydration to homoisocitrate ((1R,2S)-1-hydroxybutane-1,2,4-tricarboxylate). Is also able to hydrate the analogous longer chain substrates cis-homo(2)-aconitate, cis-homo(3)-aconitate, and even the non-physiological cis-homo(4)-aconitate with similar efficiency. These reactions are part of the biosynthesis pathway of coenzyme B. Can also catalyze the hydration of maleate to (R)-malate, and that of cis-aconitate. Cannot catalyze the hydration of citraconate and the dehydration of (S)-homocitrate, citramalate, 2-isopropylmalate, 3-isopropylmalate, citrate or threo-DL-isocitrate. The polypeptide is Methanogen homoaconitase small subunit (hacB) (Methanocaldococcus jannaschii (strain ATCC 43067 / DSM 2661 / JAL-1 / JCM 10045 / NBRC 100440) (Methanococcus jannaschii)).